The sequence spans 398 residues: Elongation factor Tu (398 aa).

Residues 10-208 (KPHVNVGTIG…ALDDYIPEPE (199 aa)) enclose the tr-type G domain. The interval 19–26 (GHVDHGKT) is G1. 19–26 (GHVDHGKT) lines the GTP pocket. Mg(2+) is bound at residue Thr26. A G2 region spans residues 61–65 (GITIA). A G3 region spans residues 82 to 85 (DCPG). GTP contacts are provided by residues 82-86 (DCPGH) and 137-140 (NKAD). Positions 137 to 140 (NKAD) are G4. The tract at residues 175 to 177 (SAL) is G5.

The protein belongs to the TRAFAC class translation factor GTPase superfamily. Classic translation factor GTPase family. EF-Tu/EF-1A subfamily. Monomer.

Its subcellular location is the cytoplasm. The enzyme catalyses GTP + H2O = GDP + phosphate + H(+). Its function is as follows. GTP hydrolase that promotes the GTP-dependent binding of aminoacyl-tRNA to the A-site of ribosomes during protein biosynthesis. This chain is Elongation factor Tu, found in Marinobacter nauticus (strain ATCC 700491 / DSM 11845 / VT8) (Marinobacter aquaeolei).